The chain runs to 67 residues: MPVELKSFDEFVKVVERAVECRVKRGKDVVKIKARTKRYLYTLKVPPEKEAEVLEQVKAKCKNLVEL.

It belongs to the eukaryotic ribosomal protein eL38 family.

This Aeropyrum pernix (strain ATCC 700893 / DSM 11879 / JCM 9820 / NBRC 100138 / K1) protein is Large ribosomal subunit protein eL38 (rpl38e).